Here is a 530-residue protein sequence, read N- to C-terminus: Histone-arginine methyltransferase CARMER (530 aa).

One can recognise an SAM-dependent MTase PRMT-type domain in the interval 141-450; that stretch reads ASQYFQFYGY…QSYDVTIDLH (310 aa). Positions 154, 163, 187, 209, 238, and 266 each coordinate S-adenosyl-L-methionine. At R501 the chain carries Asymmetric dimethylarginine; by autocatalysis.

The protein belongs to the class I-like SAM-binding methyltransferase superfamily. Protein arginine N-methyltransferase family. In terms of assembly, homodimer. In terms of processing, the dimethylated protein is the major form.

The protein resides in the cytoplasm. The protein localises to the nucleus. The catalysed reaction is L-arginyl-[protein] + 2 S-adenosyl-L-methionine = N(omega),N(omega)-dimethyl-L-arginyl-[protein] + 2 S-adenosyl-L-homocysteine + 2 H(+). Functionally, methylates (mono- and asymmetric dimethylation) the guanidino nitrogens of arginyl residues in proteins. May methylate histone H3 at 'Arg-17' and activate transcription via chromatin remodeling. The chain is Histone-arginine methyltransferase CARMER (Art4) from Drosophila sechellia (Fruit fly).